Consider the following 262-residue polypeptide: Hemin import ATP-binding protein HmuV (262 aa).

The 242-residue stretch at 3–244 (LQARNLTLAR…DHMRRVYGIE (242 aa)) folds into the ABC transporter domain. 35 to 42 (GANGAGKS) is a binding site for ATP.

This sequence belongs to the ABC transporter superfamily. Heme (hemin) importer (TC 3.A.1.14.5) family. In terms of assembly, the complex is composed of two ATP-binding proteins (HmuV), two transmembrane proteins (HmuU) and a solute-binding protein (HmuT).

It is found in the cell inner membrane. Part of the ABC transporter complex HmuTUV involved in hemin import. Responsible for energy coupling to the transport system. This Bordetella parapertussis (strain 12822 / ATCC BAA-587 / NCTC 13253) protein is Hemin import ATP-binding protein HmuV.